Consider the following 164-residue polypeptide: UPF0262 protein Nham_0287 (164 aa).

Belongs to the UPF0262 family.

The sequence is that of UPF0262 protein Nham_0287 from Nitrobacter hamburgensis (strain DSM 10229 / NCIMB 13809 / X14).